The sequence spans 448 residues: ATP synthase subunit b-delta (448 aa).

An ATP synthase subunit b region spans residues 1–168 (MSTFIGQLIG…GSVGAAKRPV (168 aa)). A helical membrane pass occupies residues 4 to 24 (FIGQLIGFAVIVFLVVKYVVP). The tract at residues 169–448 (PGGYSGMHAA…LSAAALHLPN (280 aa)) is ATP synthase subunit delta.

It in the N-terminal section; belongs to the ATPase B chain family. The protein in the C-terminal section; belongs to the ATPase delta chain family. In terms of assembly, F-type ATPases have 2 components, F(1) - the catalytic core - and F(0) - the membrane proton channel. F(1) has five subunits: alpha(3), beta(3), gamma(1), delta(1), epsilon(1). F(0) has three main subunits: a(1), b(2) and c(10-14). The alpha and beta chains form an alternating ring which encloses part of the gamma chain. F(1) is attached to F(0) by a central stalk formed by the gamma and epsilon chains, while a peripheral stalk is formed by the delta and b chains.

The protein localises to the cell membrane. In terms of biological role, f(1)F(0) ATP synthase produces ATP from ADP in the presence of a proton or sodium gradient. F-type ATPases consist of two structural domains, F(1) containing the extramembraneous catalytic core and F(0) containing the membrane proton channel, linked together by a central stalk and a peripheral stalk. During catalysis, ATP synthesis in the catalytic domain of F(1) is coupled via a rotary mechanism of the central stalk subunits to proton translocation. Functionally, this fusion protein includes a component of the F(0) channel (subunit b) and of the F(1) subunit (subunit delta). Two copies of subunit b and one of delta together form the peripheral 'stator' stalk which links F(1) to F(0). This Mycobacteroides abscessus (strain ATCC 19977 / DSM 44196 / CCUG 20993 / CIP 104536 / JCM 13569 / NCTC 13031 / TMC 1543 / L948) (Mycobacterium abscessus) protein is ATP synthase subunit b-delta (atpFH).